The chain runs to 447 residues: Probable butyrate:acetyl-CoA coenzyme A-transferase (447 aa).

220–224 (GIGGT) is a binding site for CoA. E245 serves as the catalytic 5-glutamyl coenzyme A thioester intermediate. 2 residues coordinate CoA: I320 and G343.

This sequence belongs to the acetyl-CoA hydrolase/transferase family.

The protein resides in the cytoplasm. The enzyme catalyses butanoate + acetyl-CoA = butanoyl-CoA + acetate. It participates in lipid metabolism; butanoate metabolism. Its function is as follows. Coenzyme A-transferase that converts butyrate to butyryl-CoA. Involved in the syntrophic growth of S.wolfei on butyrate in cooperation with methanogens or an appropriate hydrogen-scavenging bacterium, as part of the butyrate oxidation pathway. The protein is Probable butyrate:acetyl-CoA coenzyme A-transferase of Syntrophomonas wolfei subsp. wolfei (strain DSM 2245B / Goettingen).